Reading from the N-terminus, the 278-residue chain is Probable NADP-dependent mannitol dehydrogenase (278 aa).

NADP(+) is bound by residues isoleucine 45, asparagine 117, and lysine 152. Residues serine 171 and tyrosine 186 each act as proton donor in the active site. Residues tyrosine 186, lysine 190, and threonine 220 each contribute to the NADP(+) site. Residue lysine 190 is the Lowers pKa of active site Tyr of the active site.

Belongs to the short-chain dehydrogenases/reductases (SDR) family. In terms of assembly, homotetramer.

The catalysed reaction is D-mannitol + NADP(+) = D-fructose + NADPH + H(+). Versatile oxidoreductase that catalyzes the oxidation and reduction of polar as well as non-polar substrates at a very broad pH range. Preferentially oxidizes secondary alcohols. Has highest activity for racemic 2-heptanol and racemic octanol. Is also an efficient reductase for selected substrates. Substrate selectivity was found for medium chain length ketones with the carbonyl function at position C-2. Has highest activities for ribulose and fructose. The enzyme is (R)-selective in the reduction direction and produces exclusively the (R)-enantiomer. This is Probable NADP-dependent mannitol dehydrogenase from Yarrowia lipolytica (strain CLIB 122 / E 150) (Yeast).